A 235-amino-acid polypeptide reads, in one-letter code: Demethylmenaquinone methyltransferase (235 aa).

S-adenosyl-L-methionine is bound by residues threonine 58, aspartate 79, and 106 to 107 (NA).

The protein belongs to the class I-like SAM-binding methyltransferase superfamily. MenG/UbiE family.

The catalysed reaction is a 2-demethylmenaquinol + S-adenosyl-L-methionine = a menaquinol + S-adenosyl-L-homocysteine + H(+). It participates in quinol/quinone metabolism; menaquinone biosynthesis; menaquinol from 1,4-dihydroxy-2-naphthoate: step 2/2. Its function is as follows. Methyltransferase required for the conversion of demethylmenaquinol (DMKH2) to menaquinol (MKH2). This is Demethylmenaquinone methyltransferase from Shouchella clausii (strain KSM-K16) (Alkalihalobacillus clausii).